The following is a 273-amino-acid chain: Putative phosphoenolpyruvate synthase regulatory protein (273 aa).

153–160 provides a ligand contact to ADP; the sequence is AVSRAGKT.

The protein belongs to the pyruvate, phosphate/water dikinase regulatory protein family. PSRP subfamily.

The catalysed reaction is [pyruvate, water dikinase] + ADP = [pyruvate, water dikinase]-phosphate + AMP + H(+). It catalyses the reaction [pyruvate, water dikinase]-phosphate + phosphate + H(+) = [pyruvate, water dikinase] + diphosphate. In terms of biological role, bifunctional serine/threonine kinase and phosphorylase involved in the regulation of the phosphoenolpyruvate synthase (PEPS) by catalyzing its phosphorylation/dephosphorylation. The protein is Putative phosphoenolpyruvate synthase regulatory protein of Stenotrophomonas maltophilia (strain K279a).